Here is a 77-residue protein sequence, read N- to C-terminus: MKKLVIALCLMMVLAVMVEEAEAKWCFRVCYRGICYRRCRGKRNEVRQYRDRGYDVRAIPEETFFTRQDEDEDDDEE.

The first 23 residues, 1–23, serve as a signal peptide directing secretion; the sequence is MKKLVIALCLMMVLAVMVEEAEA. 2 disulfide bridges follow: cysteine 26–cysteine 39 and cysteine 30–cysteine 35. Arginine 40 is modified (arginine amide). Positions 41–77 are excised as a propeptide; that stretch reads GKRNEVRQYRDRGYDVRAIPEETFFTRQDEDEDDDEE.

Belongs to the tachyplesin/polyphemusin family. As to expression, hemocytes.

The protein resides in the secreted. Its function is as follows. Significantly inhibits the growth of Gram-negative and Gram-positive bacteria. This chain is Tachyplesin-1, found in Tachypleus tridentatus (Japanese horseshoe crab).